A 574-amino-acid polypeptide reads, in one-letter code: Acetolactate synthase isozyme 3 large subunit (574 aa).

Thiamine diphosphate is bound at residue Glu51. Residues Arg153, 261 to 282 (HGTY…VGVR), and 304 to 323 (DIDP…IVGD) each bind FAD. A thiamine pyrophosphate binding region spans residues 397 to 477 (QHQMFAALYY…VLVVNLNNRY (81 aa)). 2 residues coordinate Mg(2+): Asp448 and Asn475.

This sequence belongs to the TPP enzyme family. Dimer of large and small chains. Mg(2+) serves as cofactor. The cofactor is thiamine diphosphate.

The enzyme catalyses 2 pyruvate + H(+) = (2S)-2-acetolactate + CO2. Its pathway is amino-acid biosynthesis; L-isoleucine biosynthesis; L-isoleucine from 2-oxobutanoate: step 1/4. It participates in amino-acid biosynthesis; L-valine biosynthesis; L-valine from pyruvate: step 1/4. With respect to regulation, sensitive to valine inhibition. The polypeptide is Acetolactate synthase isozyme 3 large subunit (ilvI) (Escherichia coli (strain K12)).